Reading from the N-terminus, the 346-residue chain is Peripherin-2 (346 aa).

Over 1–18 (MALLKVKFDQKKRVKLAQ) the chain is Cytoplasmic. A helical membrane pass occupies residues 19–41 (GLWLMNWFSVLAGIIIFGLGLFL). At 42–62 (KIELRKRSDVMNNSESHFVPN) the chain is on the lumenal side. Asn-53 is a glycosylation site (N-linked (GlcNAc...) asparagine). A helical membrane pass occupies residues 63-79 (SLIGVGVLSCVFNSLAG). At 80-101 (KICYDALDPAKYAKWKPWLKPY) the chain is on the cytoplasmic side. A helical transmembrane segment spans residues 102-122 (LAVCVLFNVVLFLVALCCFLL). The Lumenal portion of the chain corresponds to 123-264 (RGSLESTLAH…LSYYSNLMNT (142 aa)). N-linked (GlcNAc...) asparagine glycans are attached at residues Asn-229 and Asn-263. A helical membrane pass occupies residues 265-283 (TGAVTLLVWLFEVTITVGL). Over 284–346 (RYLHTALEGM…EDAGQAPAAG (63 aa)) the chain is Cytoplasmic. An interaction with MREG region spans residues 341-346 (QAPAAG).

This sequence belongs to the PRPH2/ROM1 family. Homodimer; disulfide-linked. Forms a homotetramer. Forms a heterotetramer with ROM1. Homotetramer and heterotetramer core complexes go on to form higher order complexes by formation of intermolecular disulfide bonds. Interacts with MREG. Interacts with STX3. Interacts with SNAP25. Retina (photoreceptor). In rim region of ROS (rod outer segment) disks.

Its subcellular location is the membrane. The protein resides in the cell projection. It localises to the cilium. The protein localises to the photoreceptor outer segment. It is found in the photoreceptor inner segment. Functionally, essential for retina photoreceptor outer segment disk morphogenesis, may also play a role with ROM1 in the maintenance of outer segment disk structure. Required for the maintenance of retinal outer nuclear layer thickness. Required for the correct development and organization of the photoreceptor inner segment. The chain is Peripherin-2 (PRPH2) from Bos taurus (Bovine).